A 313-amino-acid chain; its full sequence is tRNA-cytidine(32) 2-sulfurtransferase (313 aa).

Positions 47-52 (SGGKDS) match the PP-loop motif motif. 3 residues coordinate [4Fe-4S] cluster: Cys-122, Cys-125, and Cys-213.

The protein belongs to the TtcA family. In terms of assembly, homodimer. Mg(2+) is required as a cofactor. Requires [4Fe-4S] cluster as cofactor.

The protein localises to the cytoplasm. It carries out the reaction cytidine(32) in tRNA + S-sulfanyl-L-cysteinyl-[cysteine desulfurase] + AH2 + ATP = 2-thiocytidine(32) in tRNA + L-cysteinyl-[cysteine desulfurase] + A + AMP + diphosphate + H(+). It participates in tRNA modification. Its function is as follows. Catalyzes the ATP-dependent 2-thiolation of cytidine in position 32 of tRNA, to form 2-thiocytidine (s(2)C32). The sulfur atoms are provided by the cysteine/cysteine desulfurase (IscS) system. The sequence is that of tRNA-cytidine(32) 2-sulfurtransferase from Yersinia pseudotuberculosis serotype IB (strain PB1/+).